The following is a 172-amino-acid chain: MNRQGKSVEISELSKIFSSSGSIVVAHYKGISVAQIKDLRKKMREAGGGVKVAKNRLVKIAIRDTSIRGISDLFVGQSLIVYSDSPVIAPKISVSFSNDNNEFRVLGGVVEKGVLNQDSIKQIASLPDLEGIRAGIISAIQSNATRLVRLLGTPQTQVVRAISAFVDKNQQG.

It belongs to the universal ribosomal protein uL10 family. As to quaternary structure, part of the ribosomal stalk of the 50S ribosomal subunit. The N-terminus interacts with L11 and the large rRNA to form the base of the stalk. The C-terminus forms an elongated spine to which L12 dimers bind in a sequential fashion forming a multimeric L10(L12)X complex.

Its function is as follows. Forms part of the ribosomal stalk, playing a central role in the interaction of the ribosome with GTP-bound translation factors. The polypeptide is Large ribosomal subunit protein uL10 (rplJ) (Liberibacter asiaticus (Citrus greening disease)).